The sequence spans 100 residues: MARKSLIQREKKRQRLEQKYHLIRRSSKKEIKKVPSLSEKMEIHGKLQSPPRNSAPTRLHRRCFSTGRPRATYRDFGLSGHILREMLHACLLPGATRSSW.

Residues 28 to 45 (KKEIKKVPSLSEKMEIHG) show a composition bias toward basic and acidic residues. Positions 28–59 (KKEIKKVPSLSEKMEIHGKLQSPPRNSAPTRL) are disordered.

It belongs to the universal ribosomal protein uS14 family. Part of the 30S ribosomal subunit.

It localises to the plastid. Its subcellular location is the chloroplast. In terms of biological role, binds 16S rRNA, required for the assembly of 30S particles. This is Small ribosomal subunit protein uS14c from Nandina domestica (Heavenly bamboo).